The primary structure comprises 145 residues: Halilectin 3, alpha chain (145 aa).

N-linked (GlcNAc...) asparagine glycosylation occurs at asparagine 73.

As to quaternary structure, probable heterotrimer consisting of an alpha chain and two beta chains. The alpha chain can probably have different glycosylation states. Post-translationally, glycosylated.

Functionally, lectin with affinity for N-acetyl-galactosamine, carragenan and glycoprotein porcine stomach mucin (PSM). Has metal-independent hemagglutinating activity towards erythrocytes from rabbit and human. Hemagglutinating activity is not inhibited by D-galactose, D-glucose, D-mannose, D-fucose, methyl-alpha-D-galactopyranoside, methyl-alpha-D-glucopyranoside, N-acetyl-glucosamine, N-acetyl-mannosamine, D-fructose, alpha-D-lactose, beta-D-lactose, D-lactulose, D-sucrose, fucoidan or glycoproteins thyroglobulin and ovalmucoid. The chain is Halilectin 3, alpha chain from Haliclona caerulea (Blue Caribbean sponge).